A 257-amino-acid chain; its full sequence is NAD-capped RNA hydrolase NudC (257 aa).

Substrate is bound by residues Lys-25 and Arg-69. Zn(2+) is bound by residues Cys-98 and Cys-101. Glu-111 provides a ligand contact to substrate. Zn(2+)-binding residues include Cys-116 and Cys-119. Tyr-124 contributes to the substrate binding site. The Nudix hydrolase domain maps to Pro-125–Thr-248. A divalent metal cation-binding residues include Ala-158, Glu-174, and Glu-178. Residues Gly-159 to Gly-180 carry the Nudix box motif. Position 192–199 (Gln-192–Ser-199) interacts with substrate. Glu-219 contributes to the a divalent metal cation binding site. Substrate is bound at residue Ala-241.

Belongs to the Nudix hydrolase family. NudC subfamily. As to quaternary structure, homodimer. Mg(2+) is required as a cofactor. Mn(2+) serves as cofactor. The cofactor is Zn(2+).

The enzyme catalyses a 5'-end NAD(+)-phospho-ribonucleoside in mRNA + H2O = a 5'-end phospho-adenosine-phospho-ribonucleoside in mRNA + beta-nicotinamide D-ribonucleotide + 2 H(+). The catalysed reaction is NAD(+) + H2O = beta-nicotinamide D-ribonucleotide + AMP + 2 H(+). It catalyses the reaction NADH + H2O = reduced beta-nicotinamide D-ribonucleotide + AMP + 2 H(+). MRNA decapping enzyme that specifically removes the nicotinamide adenine dinucleotide (NAD) cap from a subset of mRNAs by hydrolyzing the diphosphate linkage to produce nicotinamide mononucleotide (NMN) and 5' monophosphate mRNA. The NAD-cap is present at the 5'-end of some mRNAs and stabilizes RNA against 5'-processing. Has preference for mRNAs with a 5'-end purine. Catalyzes the hydrolysis of a broad range of dinucleotide pyrophosphates. This chain is NAD-capped RNA hydrolase NudC, found in Escherichia coli (strain 55989 / EAEC).